The primary structure comprises 816 residues: Two pore channel protein 1 (816 aa).

At 1-112 (MAVSLDDDVP…AHNHLFYLME (112 aa)) the chain is on the cytoplasmic side. A disordered region spans residues 17-64 (EGGSAPLAPSNGLGQEELPSKNGGSYAIHDSQAPSLSSGGESSPSSPA). Positions 50–63 (PSLSSGGESSPSSP) are enriched in low complexity. Residues 113 to 133 (LATALLLLLLSLCEAPAVPAL) traverse the membrane as a helical segment. Position 134 (arginine 134) is a topological domain, extracellular. A helical membrane pass occupies residues 135–155 (LGIYVHATLELFALMVVVFEL). The Cytoplasmic portion of the chain corresponds to 156 to 177 (CMKLRWLGLHTFIRHKRTMVKT). Residues 178 to 198 (SVLVVQFVEAIVVLVRQMSHV) traverse the membrane as a helical segment. At 199–200 (RV) the chain is on the extracellular side. The helical transmembrane segment at 201–220 (TRALRCIFLVDCRYCGGVRR) threads the bilayer. The Cytoplasmic segment spans residues 221–234 (NLRQIFQSLPPFMD). A helical membrane pass occupies residues 235 to 255 (ILLLLLFFMIIFAILGFYLFS). Topologically, residues 256 to 262 (PNPSDPY) are extracellular. The helical; Pore-forming intramembrane region spans 263 to 286 (FSTLENSIVSLFVLLTTANFPDVM). The Extracellular segment spans residues 287-294 (MPSYSRNP). Residues 295 to 315 (WSCVFFIVYLSIELYFIMNLL) traverse the membrane as a helical segment. The Cytoplasmic segment spans residues 316-444 (LAVVFDTFND…NILVKSKAFQ (129 aa)). The chain crosses the membrane as a helical span at residues 445–465 (YFMYLVVAVNGVWILVETFML). The Extracellular segment spans residues 466-479 (KGGNFFSKHVPWSY). A helical transmembrane segment spans residues 480–500 (LVFLTIYGVELFLKVAGLGPV). Residues 501 to 503 (EYL) are Cytoplasmic-facing. The helical transmembrane segment at 504 to 526 (SSGWNLFDFSVTVFAFLGLLALA) threads the bilayer. Over 527 to 534 (LNMEPFYF) the chain is Extracellular. Residues 535-549 (IVVLRPLQLLRLFKL) form a helical membrane-spanning segment. Over 550-573 (KERYRNVLDTMFELLPRMASLGLT) the chain is Cytoplasmic. Residues 574–594 (LLIFYYSFAIVGMEFFCGIVF) form a helical membrane-spanning segment. At 595 to 629 (PNCCNTSTVADAYRWRNHTVGNRTVVEEGYYYLNN) the chain is on the extracellular side. N-linked (GlcNAc...) asparagine glycans are attached at residues asparagine 599, asparagine 611, and asparagine 616. The helical; Pore-forming intramembrane region spans 630–653 (FDNILNSFVTLFELTVVNNWYIIM). Topologically, residues 654 to 670 (EGVTSQTSHWSRLYFMT) are extracellular. Residues 671–691 (FYIVTMVVMTIIVAFILEAFV) traverse the membrane as a helical segment. Residues 692-816 (FRMNYSRKNQ…GSRQRSQTVT (125 aa)) lie on the Cytoplasmic side of the membrane. Positions 769-796 (SLKMYQEEIQEWYEEHAREQEQQRQLSS) form a coiled coil. A disordered region spans residues 782 to 816 (EEHAREQEQQRQLSSSAAPAAQQPPGSRQRSQTVT). The span at 791 to 816 (QRQLSSSAAPAAQQPPGSRQRSQTVT) shows a compositional bias: low complexity.

The protein belongs to the calcium channel alpha-1 subunit (TC 1.A.1.11) family. Two pore calcium channel subfamily. Dimer. Interacts with MTOR; the interaction is required for TPCN1 ATP sensitivity. Interacts with STX7, STX8 and STX12. Interacts with JPT2. Found in a complex with LSM12, TPCN1 and TPCN2. In terms of processing, N-glycosylated. As to expression, highest expression found in the heart and kidney, and lowest expression found in the spleen.

It is found in the lysosome membrane. It localises to the endosome membrane. The protein resides in the early endosome membrane. Its subcellular location is the recycling endosome membrane. It catalyses the reaction Na(+)(in) = Na(+)(out). It carries out the reaction Ca(2+)(in) = Ca(2+)(out). With respect to regulation, na(+) current is inhibited by ATP in a MTORC-dependent manner. ATP sensitivity is independent of PI(3,5)P2. Probably regulated by Mg(2+) ions, cytosolic Mg(2+) selectively inhibits outward current while lysosomal Mg(2+) modestly inhibits both the outward and inward currents. In the absence of Mg(2+), NAADP readily activates TPCN2, with properties similar to PI(3,5)P2. Both current elicited by PI(3,5)P2 as well as NAADP are inhibited by tetrandrine. Functionally, intracellular channel initially characterized as a non-selective Ca(2+)-permeable channel activated by NAADP (nicotinic acid adenine dinucleotide phosphate), it is also a voltage-gated highly-selective Na(+) channel activated directly by PI(3,5)P2 (phosphatidylinositol 3,5-bisphosphate) that senses pH changes and confers electrical excitability to organelles. Localizes to the early and recycling endosomes membranes where it plays a role in the uptake and processing of proteins and regulates organellar membrane excitability, membrane trafficking and pH homeostasis. Ion selectivity is not fixed but rather agonist-dependent and under defined ionic conditions, can be readily activated by both NAADP and PI(3,5)P2. Required for mTOR-dependent nutrient sensing. Its function is as follows. (Microbial infection) During Ebola virus (EBOV) infection, controls the movement of endosomes containing virus particles and is required by EBOV to escape from the endosomal network into the cell cytoplasm. The chain is Two pore channel protein 1 from Homo sapiens (Human).